We begin with the raw amino-acid sequence, 146 residues long: 3-hydroxyacyl-[acyl-carrier-protein] dehydratase FabZ (146 aa).

Residue His49 is part of the active site.

Belongs to the thioester dehydratase family. FabZ subfamily.

The protein resides in the cytoplasm. The catalysed reaction is a (3R)-hydroxyacyl-[ACP] = a (2E)-enoyl-[ACP] + H2O. Its function is as follows. Involved in unsaturated fatty acids biosynthesis. Catalyzes the dehydration of short chain beta-hydroxyacyl-ACPs and long chain saturated and unsaturated beta-hydroxyacyl-ACPs. The polypeptide is 3-hydroxyacyl-[acyl-carrier-protein] dehydratase FabZ (Pseudomonas entomophila (strain L48)).